Reading from the N-terminus, the 207-residue chain is Small ribosomal subunit protein uS4 (207 aa).

The interval 30 to 51 (DKSKFDSKPGQHGRTSGARTSD) is disordered. Positions 97-157 (SRLDNVVYRM…EKSKKQGRIA (61 aa)) constitute an S4 RNA-binding domain.

Belongs to the universal ribosomal protein uS4 family. Part of the 30S ribosomal subunit. Contacts protein S5. The interaction surface between S4 and S5 is involved in control of translational fidelity.

Its function is as follows. One of the primary rRNA binding proteins, it binds directly to 16S rRNA where it nucleates assembly of the body of the 30S subunit. With S5 and S12 plays an important role in translational accuracy. In Verminephrobacter eiseniae (strain EF01-2), this protein is Small ribosomal subunit protein uS4.